A 215-amino-acid chain; its full sequence is Casparian strip membrane protein 3 (215 aa).

A disordered region spans residues 1 to 26; sequence MDSEKTGEAKITIQEPKAADPKGKGI. At 1–55 the chain is on the cytoplasmic side; it reads MDSEKTGEAKITIQEPKAADPKGKGIADAPPPPVVVTTAKAIQKLPRGGWKKGVA. A helical transmembrane segment spans residues 56 to 76; it reads IFDFVVRLCAIATGLAATGIM. Residues 77–101 lie on the Extracellular side of the membrane; the sequence is GTTEQTLPFFTQFFQFHAEYNDLPT. The helical transmembrane segment at 102–122 threads the bilayer; the sequence is FMFFVFANGIASGYLILSLPF. Residues 123 to 136 lie on the Cytoplasmic side of the membrane; sequence SIVCIVRPLAIVPR. Residues 137–157 form a helical membrane-spanning segment; it reads LLLIIFDTVVMALTIAAASAA. The Extracellular portion of the chain corresponds to 158-189; the sequence is AAIVYLAHNGNSNANWNAICQQFNDFCQQTST. A helical transmembrane segment spans residues 190 to 210; that stretch reads AVVASFITAAMLTFLIVLSAF. At 211-215 the chain is on the cytoplasmic side; it reads ALKRN.

Belongs to the Casparian strip membrane proteins (CASP) family. As to quaternary structure, homodimer and heterodimers.

Its subcellular location is the cell membrane. Its function is as follows. Regulates membrane-cell wall junctions and localized cell wall deposition. Required for establishment of the Casparian strip membrane domain (CSD) and the subsequent formation of Casparian strips, a cell wall modification of the root endodermis that determines an apoplastic barrier between the intraorganismal apoplasm and the extraorganismal apoplasm and prevents lateral diffusion. The chain is Casparian strip membrane protein 3 from Ricinus communis (Castor bean).